The chain runs to 134 residues: Small ribosomal subunit protein bS6 (134 aa).

A compositionally biased stretch (basic and acidic residues) spans 113–122 (NKDIKEKEQP). The segment at 113–134 (NKDIKEKEQPSESNVDADLKVN) is disordered.

The protein belongs to the bacterial ribosomal protein bS6 family.

Functionally, binds together with bS18 to 16S ribosomal RNA. This is Small ribosomal subunit protein bS6 from Borrelia recurrentis (strain A1).